A 280-amino-acid chain; its full sequence is MNMRIIEAVDIRYTYPDGTEALRGINFHAERGEVVALLGPNGAGKSTLFLHFNGILQPTSGKIMIDGEELDYSKSGLIKARQKVGIVFQNPDDQLFAPRVDEDVAFGPLNMGLSEDEVEERVRDALQKVGMLGYESKPPHHFSGGEKKRVAIAGIIAMKPDIMVLDEPTSGLDPRGASQILRLLHNLNEEGMTIIISTHDVDLAPLYSDRIYIISDGEIISTGAPSEVFSDIDTIRGANLRLPRIAHLVEILQKEDDLPFEEPYPLTIGEARRKLRNQLR.

The ABC transporter domain maps to 6–241 (IEAVDIRYTY…IDTIRGANLR (236 aa)). Residue 39-46 (GPNGAGKS) coordinates ATP.

This sequence belongs to the ABC transporter superfamily.

It is found in the cell membrane. In terms of biological role, probably part of an ABC transporter complex. Responsible for energy coupling to the transport system. The polypeptide is Putative ABC transporter ATP-binding protein MTH_133 (Methanothermobacter thermautotrophicus (strain ATCC 29096 / DSM 1053 / JCM 10044 / NBRC 100330 / Delta H) (Methanobacterium thermoautotrophicum)).